The sequence spans 478 residues: UDP-N-acetylmuramate--L-alanine ligase (478 aa).

ATP is bound at residue 120 to 126 (GSHGKTT).

The protein belongs to the MurCDEF family.

Its subcellular location is the cytoplasm. The enzyme catalyses UDP-N-acetyl-alpha-D-muramate + L-alanine + ATP = UDP-N-acetyl-alpha-D-muramoyl-L-alanine + ADP + phosphate + H(+). The protein operates within cell wall biogenesis; peptidoglycan biosynthesis. In terms of biological role, cell wall formation. The chain is UDP-N-acetylmuramate--L-alanine ligase from Rickettsia bellii (strain OSU 85-389).